The following is a 382-amino-acid chain: MPTMGAEMNTRNMRYILLTGLLPMASAFGETALQCAALTDNVTRLACYDRIFAAQLPSSAGQEGQESKAVLNLTETVRSSLDKGEAVIVVEKGGDALPADSAGETADIYTPLSLMYDLDKNDLRGLLGVREHNPMYLMPLWYNNSPNYAPGSPTRGTTVQEKFGQQKRAETKLQVSFKSKIAEDLFKTRADLWFGYTQRSDWQIYNQGRKSAPFRNTDYKPEIFLTQPVKADLPFGGRLRMLGAGFVHQSNGQSRPESRSWNRIYAMAGMEWGKLTVIPRVWVRAFDQSGDKNDNPDIADYMGYGDVKLQYRLNDRQNVYSVLRYNPKTGYGAIEAAYTFPIKGKLKGVVRGFHGYGESLIDYNHKQNGIGIGLMFNDLDGI.

Residues 1-27 (MPTMGAEMNTRNMRYILLTGLLPMASA) form the signal peptide. Residues 28-65 (FGETALQCAALTDNVTRLACYDRIFAAQLPSSAGQEGQ) lie on the Periplasmic side of the membrane. The chain crosses the membrane as a beta stranded span at residues 66–78 (ESKAVLNLTETVR). Over 79–168 (SSLDKGEAVI…VQEKFGQQKR (90 aa)) the chain is Extracellular. A beta stranded transmembrane segment spans residues 169 to 183 (AETKLQVSFKSKIAE). Residues 184–189 (DLFKTR) lie on the Periplasmic side of the membrane. Residues 190–202 (ADLWFGYTQRSDW) form a beta stranded membrane-spanning segment. Residues 203 to 213 (QIYNQGRKSAP) are Extracellular-facing. Ser-211 contributes to the Ca(2+) binding site. A beta stranded transmembrane segment spans residues 214-233 (FRNTDYKPEIFLTQPVKADL). Topologically, residues 234 to 236 (PFG) are periplasmic. A beta stranded membrane pass occupies residues 237 to 250 (GRLRMLGAGFVHQS). His-248 functions as the Proton acceptor in the catalytic mechanism. Ser-250 functions as the Nucleophile in the catalytic mechanism. The Extracellular portion of the chain corresponds to 251-259 (NGQSRPESR). Ca(2+) is bound at residue Ser-258. A beta stranded transmembrane segment spans residues 260–272 (SWNRIYAMAGMEW). Residues 273–274 (GK) are Periplasmic-facing. The chain crosses the membrane as a beta stranded span at residues 275–284 (LTVIPRVWVR). At 285–306 (AFDQSGDKNDNPDIADYMGYGD) the chain is on the extracellular side. Asp-294 is a binding site for Ca(2+). The beta stranded transmembrane segment at 307–313 (VKLQYRL) threads the bilayer. Residues 314-315 (ND) are Periplasmic-facing. Residues 316–325 (RQNVYSVLRY) traverse the membrane as a beta stranded segment. The Extracellular portion of the chain corresponds to 326–332 (NPKTGYG). Residues 333-341 (AIEAAYTFP) form a beta stranded membrane-spanning segment. Over 342-346 (IKGKL) the chain is Periplasmic. Residues 347 to 356 (KGVVRGFHGY) traverse the membrane as a beta stranded segment. At 357–365 (GESLIDYNH) the chain is on the extracellular side. Residues 366 to 377 (KQNGIGIGLMFN) form a beta stranded membrane-spanning segment. Residues 378–382 (DLDGI) are Periplasmic-facing.

This sequence belongs to the phospholipase A1 family. As to quaternary structure, homodimer; dimerization is reversible, and the dimeric form is the active one. It depends on Ca(2+) as a cofactor.

It localises to the cell outer membrane. It catalyses the reaction a 1,2-diacyl-sn-glycero-3-phosphocholine + H2O = a 2-acyl-sn-glycero-3-phosphocholine + a fatty acid + H(+). The catalysed reaction is a 1,2-diacyl-sn-glycero-3-phosphocholine + H2O = a 1-acyl-sn-glycero-3-phosphocholine + a fatty acid + H(+). Functionally, hydrolysis of phosphatidylcholine with phospholipase A2 (EC 3.1.1.4) and phospholipase A1 (EC 3.1.1.32) activities. This Neisseria meningitidis serogroup B (strain ATCC BAA-335 / MC58) protein is Putative phospholipase A1.